A 367-amino-acid chain; its full sequence is Anthranilate phosphoribosyltransferase (367 aa).

5-phospho-alpha-D-ribose 1-diphosphate contacts are provided by residues G105, 108–109, T113, 115–118, 133–141, and G145; these read GD, NIST, and KHGNRAASS. G105 is a binding site for anthranilate. Residue S117 participates in Mg(2+) binding. Residue N136 participates in anthranilate binding. R191 contacts anthranilate. Mg(2+)-binding residues include D249 and E250.

It belongs to the anthranilate phosphoribosyltransferase family. In terms of assembly, homodimer. Requires Mg(2+) as cofactor.

It carries out the reaction N-(5-phospho-beta-D-ribosyl)anthranilate + diphosphate = 5-phospho-alpha-D-ribose 1-diphosphate + anthranilate. The protein operates within amino-acid biosynthesis; L-tryptophan biosynthesis; L-tryptophan from chorismate: step 2/5. Catalyzes the transfer of the phosphoribosyl group of 5-phosphorylribose-1-pyrophosphate (PRPP) to anthranilate to yield N-(5'-phosphoribosyl)-anthranilate (PRA). The sequence is that of Anthranilate phosphoribosyltransferase from Corynebacterium jeikeium (strain K411).